The chain runs to 226 residues: Neuron-specific vesicular protein calcyon (226 aa).

The tract at residues 1–23 (MVKLGCSFSGKPGKETGDQDGAA) is disordered. Over 1 to 88 (MVKLGCSFSG…EEGRRLPTAR (88 aa)) the chain is Extracellular. Residues 89-109 (MIAFAMALLGCVLIMYKAIWY) form a helical membrane-spanning segment. The Cytoplasmic portion of the chain corresponds to 110 to 226 (DQFTCPDGFL…AEDVPSQSPK (117 aa)). Residues 189 to 226 (TAAAAAAAEGNEPSGKPLDMREKEDPQKAEDVPSQSPK) are disordered. Residues 206-219 (LDMREKEDPQKAED) are compositionally biased toward basic and acidic residues.

It belongs to the NSG family. Interacts with CLTA. Expressed exclusively in neurons (at protein level). In all age groups, expressed at significantly higher levels in the medial prefrontal and orbital frontal cortices of spontaneously hypertensive rats (SHR), a model of attention deficit-hyperactivity disorder, than Wistar Kyoto (WKY) animals. In the motor cortex, dorsal striatum and nucleus accumbens, expression is significantly elevated in SHR only in younger animals.

It is found in the cytoplasmic vesicle membrane. It localises to the cell membrane. In terms of biological role, interacts with clathrin light chain A and stimulates clathrin self-assembly and clathrin-mediated endocytosis. The protein is Neuron-specific vesicular protein calcyon (Caly) of Rattus norvegicus (Rat).